The sequence spans 856 residues: MAP kinase phosphatase with leucine-rich repeats protein 3 (856 aa).

Over residues 1–10 the composition is skewed to low complexity; it reads MGNSHSSENG. Disordered stretches follow at residues 1–24, 84–195, and 214–326; these read MGNSHSSENGGNSGSGGGSGGGGS, VKKN…SSVL, and DDNS…NAKD. Residue G2 is the site of N-myristoyl glycine attachment. Gly residues predominate over residues 11–24; it reads GNSGSGGGSGGGGS. Low complexity predominate over residues 90–142; that stretch reads NSSNNNSNNNSNNNNNNNTLNNSTIITTTTTTTTTSTPTTTIMITPPQQQQQQ. Polar residues predominate over residues 155–165; sequence ESSTPNEQQIR. Low complexity-rich tracts occupy residues 178–195 and 224–243; these read ESSFLKSSPVPSPSSSVL and QQQQQQQNEDSKQSSQQQTQ. 2 stretches are compositionally biased toward polar residues: residues 254–265 and 272–281; these read IVNNKSSSTTNI and AQTSRSTSIP. Low complexity predominate over residues 306 to 323; the sequence is NSLSSSNIITPNNTTNTN. LRR repeat units follow at residues 344–365, 370–391, 392–413, 416–437, 439–461, 462–484, 485–506, and 507–528; these read KIFSLDLSINRLENITNDILSI, EIQELTLSTNFFQIIPDLQLVK, SLTTVNLTRNKLSKLQTSVFIE, SLTSLILDRNFISSIPDDIDQI, NLKYLSIKHNALEYLPNSLSNLS, QLISLDLSQNKLKTLPPNFDDLI, NLRMVWLSYNQITSLPSMRKLV, and NLVTFDISSNKLLSLPKDFAYL. The segment at 554 to 577 is disordered; it reads NINSNNNDSNNSNNNNNNNNDNNN. Positions 632 to 773 constitute a Tyrosine-protein phosphatase domain; that stretch reads IPSEIIPGIF…LLKYEAKLFC (142 aa). Residue C717 is the Phosphocysteine intermediate of the active site. Residues 810–856 form a disordered region; the sequence is INNSSNSNNNNSTDNSNNSSTSTTPNLSSLSSDSSSSASLSKLSISK.

Belongs to the protein-tyrosine phosphatase family. Non-receptor class dual specificity subfamily.

The catalysed reaction is O-phospho-L-tyrosyl-[protein] + H2O = L-tyrosyl-[protein] + phosphate. It carries out the reaction O-phospho-L-seryl-[protein] + H2O = L-seryl-[protein] + phosphate. It catalyses the reaction O-phospho-L-threonyl-[protein] + H2O = L-threonyl-[protein] + phosphate. Probable phosphatase with dual specificity toward Ser/Thr and Tyr-containing proteins. This chain is MAP kinase phosphatase with leucine-rich repeats protein 3 (mpl3), found in Dictyostelium discoideum (Social amoeba).